The sequence spans 49 residues: Photosystem II reaction center protein K (49 aa).

Residues 1 to 12 constitute a propeptide that is removed on maturation; that stretch reads MISSIHLRKLLG. A helical membrane pass occupies residues 24 to 44; sequence IIDVLPIIPVLFLLLAFVWQA.

This sequence belongs to the PsbK family. PSII is composed of 1 copy each of membrane proteins PsbA, PsbB, PsbC, PsbD, PsbE, PsbF, PsbH, PsbI, PsbJ, PsbK, PsbL, PsbM, PsbT, PsbX, PsbY, PsbZ, Psb30/Ycf12, at least 3 peripheral proteins of the oxygen-evolving complex and a large number of cofactors. It forms dimeric complexes.

It localises to the plastid. The protein localises to the chloroplast thylakoid membrane. In terms of biological role, one of the components of the core complex of photosystem II (PSII). PSII is a light-driven water:plastoquinone oxidoreductase that uses light energy to abstract electrons from H(2)O, generating O(2) and a proton gradient subsequently used for ATP formation. It consists of a core antenna complex that captures photons, and an electron transfer chain that converts photonic excitation into a charge separation. In Phacus acuminatus, this protein is Photosystem II reaction center protein K.